Reading from the N-terminus, the 144-residue chain is Large ribosomal subunit protein uL11 (144 aa).

Belongs to the universal ribosomal protein uL11 family. In terms of assembly, part of the ribosomal stalk of the 50S ribosomal subunit. Interacts with L10 and the large rRNA to form the base of the stalk. L10 forms an elongated spine to which L12 dimers bind in a sequential fashion forming a multimeric L10(L12)X complex. One or more lysine residues are methylated.

Its function is as follows. Forms part of the ribosomal stalk which helps the ribosome interact with GTP-bound translation factors. The protein is Large ribosomal subunit protein uL11 of Neisseria gonorrhoeae (strain ATCC 700825 / FA 1090).